The chain runs to 103 residues: Small ribosomal subunit protein uS10 (103 aa).

Belongs to the universal ribosomal protein uS10 family. Part of the 30S ribosomal subunit.

Involved in the binding of tRNA to the ribosomes. In Buchnera aphidicola subsp. Cinara cedri (strain Cc), this protein is Small ribosomal subunit protein uS10.